We begin with the raw amino-acid sequence, 893 residues long: Sulfate permease 2 (893 aa).

The tract at residues 1–25 (MSREGYPNFEEVEIPDFQETNNTVP) is disordered. The Cytoplasmic segment spans residues 1–131 (MSREGYPNFE…VFPIINWLPH (131 aa)). A helical membrane pass occupies residues 132–152 (YNFSWFTADLIAGITIGCVLV). At 153 to 163 (PQSMSYAQVAT) the chain is on the extracellular side. Residues 164 to 184 (LPAQYGLYSSFIGAYSYSFFA) form a helical membrane-spanning segment. Residues 185–188 (TSKD) lie on the Cytoplasmic side of the membrane. A helical membrane pass occupies residues 189–209 (VCIGPVAVMSLQTAKVIADVT). Residues 210 to 221 (AKYPDGDSAITG) are Extracellular-facing. Residues 222-242 (PVIATTLALLCGIISAAVGFL) form a helical membrane-spanning segment. Residues 243–244 (RL) are Cytoplasmic-facing. A helical transmembrane segment spans residues 245–265 (GFLVELISLNAVAGFMTGSAF). Residues 266–305 (NILWGQVPALMGYNSLVNTRAATYKVVIETLKHLPDTKLD) lie on the Extracellular side of the membrane. The chain crosses the membrane as a helical span at residues 306 to 326 (AVFGLIPLFLLYVWKWWCGTY). Over 327 to 350 (GPRLNDRYNSKNPRLHKIIKWTYF) the chain is Cytoplasmic. Residues 351–371 (YAQASRNGIIIIVFTCIGWAI) traverse the membrane as a helical segment. At 372-399 (TRGKSKSERPISILGSVPSGLKEVGVFH) the chain is on the extracellular side. A helical membrane pass occupies residues 400 to 420 (VPPGLMSKLGPNLPASIIVLL). Over 421–443 (LEHIAISKSFGRINDYKVVPDQE) the chain is Cytoplasmic. Residues 444 to 464 (LIAIGVSNLLGTFFNAYPATG) traverse the membrane as a helical segment. The Extracellular portion of the chain corresponds to 465 to 483 (SFSRSALKAKCNVRTPLSG). A helical membrane pass occupies residues 484-504 (LFSGSCVLLALYCLTGAFFYI). At 505 to 532 (PKATLSAVIIHAVSDLLASYQTTWNFWK) the chain is on the cytoplasmic side. A helical membrane pass occupies residues 533–551 (MNPLDFICFIVTVLITVFA). The Extracellular portion of the chain corresponds to 552–559 (SIEDGIYF). Residues 560–580 (AMCWSCAMLILKVAFPAGKFL) form a helical membrane-spanning segment. Residues 581–893 (GRVEVAEVTD…DIPDFAKWDI (313 aa)) lie on the Cytoplasmic side of the membrane. The 179-residue stretch at 676 to 854 (DVQILPPPDG…SIVAGHTSYH (179 aa)) folds into the STAS domain.

It belongs to the SLC26A/SulP transporter (TC 2.A.53) family.

The protein localises to the membrane. Its function is as follows. High affinity uptake of sulfate into the cell. The polypeptide is Sulfate permease 2 (SUL2) (Saccharomyces cerevisiae (strain ATCC 204508 / S288c) (Baker's yeast)).